Reading from the N-terminus, the 269-residue chain is GTP cyclohydrolase FolE2 2 (269 aa).

Belongs to the GTP cyclohydrolase IV family.

It carries out the reaction GTP + H2O = 7,8-dihydroneopterin 3'-triphosphate + formate + H(+). The protein operates within cofactor biosynthesis; 7,8-dihydroneopterin triphosphate biosynthesis; 7,8-dihydroneopterin triphosphate from GTP: step 1/1. Functionally, converts GTP to 7,8-dihydroneopterin triphosphate. The chain is GTP cyclohydrolase FolE2 2 from Burkholderia lata (strain ATCC 17760 / DSM 23089 / LMG 22485 / NCIMB 9086 / R18194 / 383).